Consider the following 108-residue polypeptide: Parvalbumin beta (108 aa).

EF-hand domains lie at Lys38 to Thr73 and Leu77 to Ala108. The Ca(2+) site is built by Asp51, Asp53, Ser55, Phe57, Glu59, Glu62, Asp90, Asp92, Asp94, Lys96, and Glu101.

The protein belongs to the parvalbumin family.

In terms of biological role, in muscle, parvalbumin is thought to be involved in relaxation after contraction. It binds two calcium ions. The protein is Parvalbumin beta of Graptemys geographica (Common map turtle).